The following is a 90-amino-acid chain: Probable Fe(2+)-trafficking protein (90 aa).

It belongs to the Fe(2+)-trafficking protein family.

Functionally, could be a mediator in iron transactions between iron acquisition and iron-requiring processes, such as synthesis and/or repair of Fe-S clusters in biosynthetic enzymes. This is Probable Fe(2+)-trafficking protein from Aliivibrio salmonicida (strain LFI1238) (Vibrio salmonicida (strain LFI1238)).